The following is a 670-amino-acid chain: Amyloid beta A4 precursor protein-binding family B member 1-interacting protein (670 aa).

Ser55 carries the post-translational modification Phosphoserine. The 88-residue stretch at 179–266 folds into the Ras-associating domain; sequence KKLVVKVHMD…KVLFLEKEER (88 aa). In terms of domain architecture, PH spans 313–422; sequence VPELEGALYL…WVMGIRIAKY (110 aa). The interval 449-653 is disordered; the sequence is VGTPMPAQPS…PGAPGNSEQD (205 aa). The span at 456 to 475 shows a compositional bias: polar residues; the sequence is QPSTVSSGLKTGTSQPNGQM. Phosphoserine is present on Ser532. Residue Thr534 is modified to Phosphothreonine. Residue Ser537 is modified to Phosphoserine. 4 stretches are compositionally biased toward pro residues: residues 553–567, 576–599, 606–615, and 625–634; these read PHPPENFLPPPPPPP, LPPPPPPPYLEEPPDFVPPPPPPA, LPPPPPPPPC, and PLPPKKPLVP.

The protein belongs to the MRL family. In terms of assembly, interacts, through the N-terminal Pro-rich region, with the WW domain of APBB1. Interacts with RAP1A, PFN1, VASP and ENAH. In terms of tissue distribution, ubiquitously expressed with high expression in the hematopoietic system.

It is found in the cell membrane. Its subcellular location is the cell projection. The protein resides in the lamellipodium. The protein localises to the cell junction. It localises to the focal adhesion. It is found in the cytoplasm. Its subcellular location is the cytoskeleton. Functionally, appears to function in the signal transduction from Ras activation to actin cytoskeletal remodeling. Suppresses insulin-induced promoter activities through AP1 and SRE. Mediates Rap1-induced adhesion. The protein is Amyloid beta A4 precursor protein-binding family B member 1-interacting protein (Apbb1ip) of Mus musculus (Mouse).